The sequence spans 133 residues: CDGSH iron-sulfur domain-containing protein 2 homolog (133 aa).

Residues 1–35 (MEPISHLVKSSLPNYLSSLPIPDSIGGWFKLSFKD) lie on the Lumenal side of the membrane. Residues 36–58 (WLALIPPTVVVAGLGYTAYLAYC) traverse the membrane as a helical segment. Over 59–133 (PAAQGSCSAK…DNVGPIVIKK (75 aa)) the chain is Cytoplasmic. 4 residues coordinate [2Fe-2S] cluster: Cys-100, Cys-102, Cys-111, and His-115.

The protein belongs to the CISD protein family. CISD2 subfamily. [2Fe-2S] cluster is required as a cofactor.

Its subcellular location is the endoplasmic reticulum membrane. The sequence is that of CDGSH iron-sulfur domain-containing protein 2 homolog from Drosophila erecta (Fruit fly).